Consider the following 315-residue polypeptide: Calumenin (315 aa).

The N-terminal stretch at 1–19 is a signal peptide; it reads MDTRRLLLCLCLWVACVVS. EF-hand domains follow at residues 68 to 103, 104 to 139, 151 to 186, 188 to 223, 229 to 264, and 265 to 300; these read ESKERLGMIVSKIDLDNDGYVTEGELTAWIKKAQKK, YVYDNVERQWQEFDLNQDGLVSWDEYRNVTYGTYLD, QMMVRDERRFKMADQDGDLIATKEEFTAFLHPEEFD, MKDIVVLETMEDIDKNGDGLIDLEEYIGDMYNHDGD, WVKTEREQFVEFRDKNHDGKMDKEETKDWILPSDYD, and HAEAESRHLVYESDQNKDSKLTREEIVDKYDLFVGS. Aspartate 81, aspartate 83, aspartate 85, tyrosine 87, glutamate 92, aspartate 117, asparagine 119, aspartate 121, and glutamate 128 together coordinate Ca(2+). Asparagine 131 is a glycosylation site (N-linked (GlcNAc...) asparagine). Ca(2+) is bound by residues aspartate 164, aspartate 166, aspartate 168, glutamate 175, aspartate 201, asparagine 203, aspartate 205, glutamate 212, aspartate 242, asparagine 244, aspartate 246, lysine 248, glutamate 253, aspartate 278, asparagine 280, aspartate 282, lysine 284, and glutamate 289. A Prevents secretion from ER motif is present at residues 312-315; it reads HDEF.

This sequence belongs to the CREC family. Interacts with ggcx.

It localises to the endoplasmic reticulum membrane. It is found in the golgi apparatus. The protein resides in the secreted. Its subcellular location is the melanosome. The protein localises to the sarcoplasmic reticulum lumen. Involved in regulation of vitamin K-dependent carboxylation of multiple N-terminal glutamate residues. Seems to inhibit gamma-carboxylase ggcx. Binds 7 calcium ions with a low affinity. The chain is Calumenin (calu) from Xenopus tropicalis (Western clawed frog).